Consider the following 305-residue polypeptide: Putative lipid kinase SAR0780 (305 aa).

A DAGKc domain is found at 3-139 (NKYTHGVLFY…YDVIKINNQY (137 aa)). Residues serine 44, 74-80 (GDGTVNE), and threonine 101 each bind ATP. 3 residues coordinate Mg(2+): serine 220, aspartate 223, and glutamate 225. The active-site Proton acceptor is glutamate 281.

This sequence belongs to the diacylglycerol/lipid kinase family. The cofactor is Mg(2+).

Functionally, may catalyze the ATP-dependent phosphorylation of lipids other than diacylglycerol (DAG). In fact, is not able to exhibit diacylglycerol kinase activity in vitro. The chain is Putative lipid kinase SAR0780 from Staphylococcus aureus (strain MRSA252).